We begin with the raw amino-acid sequence, 196 residues long: Shikimate kinase (196 aa).

An ATP-binding site is contributed by 32–37 (GAGKSA). Residue S36 participates in Mg(2+) binding. Residues D54, R78, and G100 each contribute to the substrate site. ATP is bound at residue R138. R157 serves as a coordination point for substrate. ATP is bound at residue R174.

Belongs to the shikimate kinase family. As to quaternary structure, monomer. Requires Mg(2+) as cofactor.

It localises to the cytoplasm. It catalyses the reaction shikimate + ATP = 3-phosphoshikimate + ADP + H(+). The protein operates within metabolic intermediate biosynthesis; chorismate biosynthesis; chorismate from D-erythrose 4-phosphate and phosphoenolpyruvate: step 5/7. Catalyzes the specific phosphorylation of the 3-hydroxyl group of shikimic acid using ATP as a cosubstrate. This is Shikimate kinase from Rhizobium leguminosarum bv. trifolii (strain WSM2304).